The chain runs to 65 residues: uncharacterized protein (65 aa).

2 helical membrane passes run 4–24 (AWLF…DKVL) and 39–59 (LPIP…FIVF).

Its subcellular location is the membrane. This is an uncharacterized protein from Streptococcus pneumoniae serotype 2 (strain D39 / NCTC 7466).